We begin with the raw amino-acid sequence, 197 residues long: Small ribosomal subunit protein uS5 (197 aa).

The tract at residues 1-27 (MAEREQRGGRDQRGGGRERKEREERDS) is disordered. In terms of domain architecture, S5 DRBM spans 29–92 (FVDKLVHINR…ESAKRNLTRV (64 aa)).

Belongs to the universal ribosomal protein uS5 family. As to quaternary structure, part of the 30S ribosomal subunit. Contacts proteins S4 and S8.

Functionally, with S4 and S12 plays an important role in translational accuracy. In terms of biological role, located at the back of the 30S subunit body where it stabilizes the conformation of the head with respect to the body. This is Small ribosomal subunit protein uS5 from Bradyrhizobium diazoefficiens (strain JCM 10833 / BCRC 13528 / IAM 13628 / NBRC 14792 / USDA 110).